We begin with the raw amino-acid sequence, 233 residues long: Modulator of macroautophagy TMEM150B (233 aa).

The Cytoplasmic portion of the chain corresponds to 1 to 7; the sequence is MWGYLSL. The helical transmembrane segment at 8–28 threads the bilayer; it reads MPVFLAVWAISGVWIVFAIAV. Residues 29-51 lie on the Extracellular side of the membrane; that stretch reads TNRTVDLSKGFPYISICGSFPPQ. N-linked (GlcNAc...) asparagine glycosylation is present at asparagine 30. The chain crosses the membrane as a helical span at residues 52 to 72; that stretch reads SCIFSQVLNMGAALAAWICIV. The Cytoplasmic segment spans residues 73–84; the sequence is RYHQLRDWGVRR. A helical transmembrane segment spans residues 85-105; it reads WPNQLILWTGLLCALGTSVVG. Over 106-116 the chain is Extracellular; sequence NFQEKNQRPTH. Residues 117-137 form a helical membrane-spanning segment; it reads LAGAFLAFILGNVYFWLQLLL. At 138 to 155 the chain is on the cytoplasmic side; the sequence is WRLKRLPQPGAAWIGPLR. Residues 156 to 176 traverse the membrane as a helical segment; sequence LGLCSVCTILIVAMIVLHACS. Over 177–185 the chain is Extracellular; it reads LRSVSAACE. A helical membrane pass occupies residues 186 to 206; it reads WVVAMLLFALFGLLAVDFSAL. Residues 207–233 lie on the Cytoplasmic side of the membrane; that stretch reads ESCTLCVQPWPSLSPPPASPISLPVQL.

This sequence belongs to the DRAM/TMEM150 family. In terms of tissue distribution, highly expressed in the colon and lung with comparatively high levels also detectable in the lymph nodes, placenta, duodenum, peripheral blood mononuclear cells and spleen.

It localises to the cell membrane. Its subcellular location is the endosome membrane. It is found in the cytoplasmic vesicle. The protein localises to the autophagosome membrane. Modulator of macroautophagy that causes accumulation of autophagosomes under basal conditions and enhances autophagic flux. Represses cell death and promotes long-term clonogenic survival of cells grown in the absence of glucose in a macroautophagy-independent manner. May have some role in extracellular matrix engulfment or growth factor receptor recycling, both of which can modulate cell survival. The chain is Modulator of macroautophagy TMEM150B from Homo sapiens (Human).